A 265-amino-acid polypeptide reads, in one-letter code: MQPDLHCRTLAAHTLKHFRALSPLTHCMTNDVVQTFTANTLLALGASPAMVIDPVEARPFAAIANALLINVGTLTASRADAMRAAVESAYDAKTPWTLDPVAVGALEFRRRFCLDLLSLRPAAIRGNASEILALSGMALGGRGVDTTEAALAALPAAQALARQIDCIVVVTGEVDYVTNGQRTLSIPGGDPLMTRIVGTGCALSAVVAASCALPGAALDNVASACCWMKLAGQAAAERSEGPGSFIPAFLDALYHLDVEAANATN.

Position 50 (methionine 50) interacts with substrate. Arginine 125 and threonine 171 together coordinate ATP. Glycine 198 serves as a coordination point for substrate.

It belongs to the Thz kinase family. It depends on Mg(2+) as a cofactor.

It catalyses the reaction 5-(2-hydroxyethyl)-4-methylthiazole + ATP = 4-methyl-5-(2-phosphooxyethyl)-thiazole + ADP + H(+). It participates in cofactor biosynthesis; thiamine diphosphate biosynthesis; 4-methyl-5-(2-phosphoethyl)-thiazole from 5-(2-hydroxyethyl)-4-methylthiazole: step 1/1. In terms of biological role, catalyzes the phosphorylation of the hydroxyl group of 4-methyl-5-beta-hydroxyethylthiazole (THZ). The polypeptide is Hydroxyethylthiazole kinase (Salmonella newport (strain SL254)).